The sequence spans 159 residues: Ribosomal RNA large subunit methyltransferase H (159 aa).

S-adenosyl-L-methionine is bound by residues L76 and G108.

This sequence belongs to the RNA methyltransferase RlmH family. Homodimer.

It localises to the cytoplasm. It carries out the reaction pseudouridine(1915) in 23S rRNA + S-adenosyl-L-methionine = N(3)-methylpseudouridine(1915) in 23S rRNA + S-adenosyl-L-homocysteine + H(+). In terms of biological role, specifically methylates the pseudouridine at position 1915 (m3Psi1915) in 23S rRNA. The sequence is that of Ribosomal RNA large subunit methyltransferase H from Limosilactobacillus reuteri (strain DSM 20016) (Lactobacillus reuteri).